The primary structure comprises 369 residues: Aminomethyltransferase (369 aa).

Belongs to the GcvT family. As to quaternary structure, the glycine cleavage system is composed of four proteins: P, T, L and H.

It catalyses the reaction N(6)-[(R)-S(8)-aminomethyldihydrolipoyl]-L-lysyl-[protein] + (6S)-5,6,7,8-tetrahydrofolate = N(6)-[(R)-dihydrolipoyl]-L-lysyl-[protein] + (6R)-5,10-methylene-5,6,7,8-tetrahydrofolate + NH4(+). Its function is as follows. The glycine cleavage system catalyzes the degradation of glycine. This chain is Aminomethyltransferase, found in Alkaliphilus metalliredigens (strain QYMF).